The following is a 173-amino-acid chain: Soluble secreted antigen MPT53 (173 aa).

Positions 1–38 (MSLRLVSPIKAFADGIVAVAIAVVLMFGLANTPRAVAA) are cleaved as a signal peptide. A disulfide bond links cysteine 73 and cysteine 76.

Belongs to the thioredoxin family.

The protein localises to the secreted. Functionally, disulfide oxidoreductase that catalyzes the oxidation of reduced, unfolded secreted proteins to form disulfide bonds. Despite a weak homology to thioredoxin this cannot serve as a substrate for thioredoxin reductase. The chain is Soluble secreted antigen MPT53 (mpt53) from Mycobacterium bovis (strain ATCC BAA-935 / AF2122/97).